Here is a 116-residue protein sequence, read N- to C-terminus: Small ribosomal subunit protein bS16 (116 aa).

The protein belongs to the bacterial ribosomal protein bS16 family.

This chain is Small ribosomal subunit protein bS16, found in Chlamydia muridarum (strain MoPn / Nigg).